Consider the following 273-residue polypeptide: Putative phosphoenolpyruvate synthase regulatory protein (273 aa).

153-160 (GVSRCGKT) provides a ligand contact to ADP.

This sequence belongs to the pyruvate, phosphate/water dikinase regulatory protein family. PSRP subfamily.

The enzyme catalyses [pyruvate, water dikinase] + ADP = [pyruvate, water dikinase]-phosphate + AMP + H(+). The catalysed reaction is [pyruvate, water dikinase]-phosphate + phosphate + H(+) = [pyruvate, water dikinase] + diphosphate. Bifunctional serine/threonine kinase and phosphorylase involved in the regulation of the phosphoenolpyruvate synthase (PEPS) by catalyzing its phosphorylation/dephosphorylation. This Pectobacterium atrosepticum (strain SCRI 1043 / ATCC BAA-672) (Erwinia carotovora subsp. atroseptica) protein is Putative phosphoenolpyruvate synthase regulatory protein.